The chain runs to 384 residues: 1-deoxy-D-xylulose 5-phosphate reductoisomerase (384 aa).

Residues Thr11, Gly12, Ser13, Ile14, Lys38, and Asn123 each coordinate NADPH. Lys124 contacts 1-deoxy-D-xylulose 5-phosphate. Glu125 serves as a coordination point for NADPH. Residue Asp148 coordinates Mn(2+). Positions 149, 150, 174, and 197 each coordinate 1-deoxy-D-xylulose 5-phosphate. Residue Glu150 participates in Mn(2+) binding. Gly203 contributes to the NADPH binding site. Positions 210, 215, 216, and 219 each coordinate 1-deoxy-D-xylulose 5-phosphate. Residue Glu219 coordinates Mn(2+).

The protein belongs to the DXR family. Mg(2+) is required as a cofactor. Requires Mn(2+) as cofactor.

The catalysed reaction is 2-C-methyl-D-erythritol 4-phosphate + NADP(+) = 1-deoxy-D-xylulose 5-phosphate + NADPH + H(+). It participates in isoprenoid biosynthesis; isopentenyl diphosphate biosynthesis via DXP pathway; isopentenyl diphosphate from 1-deoxy-D-xylulose 5-phosphate: step 1/6. In terms of biological role, catalyzes the NADPH-dependent rearrangement and reduction of 1-deoxy-D-xylulose-5-phosphate (DXP) to 2-C-methyl-D-erythritol 4-phosphate (MEP). This is 1-deoxy-D-xylulose 5-phosphate reductoisomerase from Halothermothrix orenii (strain H 168 / OCM 544 / DSM 9562).